The sequence spans 356 residues: Guanine nucleotide-binding protein alpha-15 subunit (356 aa).

Residue Gly-2 is the site of N-myristoyl glycine attachment. The S-palmitoyl cysteine moiety is linked to residue Cys-5. A G-alpha domain is found at 33–356 (GNQKLLLLGT…GRNLRGTGME (324 aa)). The G1 motif stretch occupies residues 36 to 49 (KLLLLGTGECGKST). GTP is bound by residues 41-48 (GTGECGKS), 177-183 (LRIRIPT), 202-206 (DVGGQ), 271-274 (NKRD), and Ala-328. 2 residues coordinate Mg(2+): Ser-48 and Thr-183. Residues 175–183 (DMLRIRIPT) are G2 motif. Residues 198-207 (FRIFDVGGQR) form a G3 motif region. The G4 motif stretch occupies residues 267–274 (ILFLNKRD). A G5 motif region spans residues 326-331 (TCATDT).

This sequence belongs to the G-alpha family. As to quaternary structure, g proteins are composed of 3 units; alpha, beta and gamma. The alpha chain contains the guanine nucleotide binding site.

Guanine nucleotide-binding proteins (G proteins) are involved as modulators or transducers in various transmembrane signaling systems. The protein is Guanine nucleotide-binding protein alpha-15 subunit (gpa-15) of Caenorhabditis briggsae.